A 256-amino-acid chain; its full sequence is Thiazole synthase (256 aa).

Catalysis depends on Lys95, which acts as the Schiff-base intermediate with DXP. 1-deoxy-D-xylulose 5-phosphate contacts are provided by residues Gly156, 182–183 (AG), and 204–205 (NT).

It belongs to the ThiG family. In terms of assembly, homotetramer. Forms heterodimers with either ThiH or ThiS.

It localises to the cytoplasm. It catalyses the reaction [ThiS sulfur-carrier protein]-C-terminal-Gly-aminoethanethioate + 2-iminoacetate + 1-deoxy-D-xylulose 5-phosphate = [ThiS sulfur-carrier protein]-C-terminal Gly-Gly + 2-[(2R,5Z)-2-carboxy-4-methylthiazol-5(2H)-ylidene]ethyl phosphate + 2 H2O + H(+). It participates in cofactor biosynthesis; thiamine diphosphate biosynthesis. Functionally, catalyzes the rearrangement of 1-deoxy-D-xylulose 5-phosphate (DXP) to produce the thiazole phosphate moiety of thiamine. Sulfur is provided by the thiocarboxylate moiety of the carrier protein ThiS. In vitro, sulfur can be provided by H(2)S. The chain is Thiazole synthase from Salmonella arizonae (strain ATCC BAA-731 / CDC346-86 / RSK2980).